Here is a 68-residue protein sequence, read N- to C-terminus: U1-agatoxin-Ta1c (68 aa).

A signal peptide spans 1–17; the sequence is MKLQLMICLVLLPCFFC. 3 disulfides stabilise this stretch: Cys23/Cys53, Cys39/Cys49, and Cys42/Cys62. Residue Lys67 is modified to Lysine amide.

This sequence belongs to the helical arthropod-neuropeptide-derived (HAND) family. In terms of tissue distribution, expressed by the venom gland.

It localises to the secreted. In terms of biological role, toxin that paralyzes insects. May have a direct effect on the insect central nervous system. The protein is U1-agatoxin-Ta1c of Eratigena agrestis (Hobo spider).